The primary structure comprises 192 residues: Thymidylate kinase (192 aa).

An ATP-binding site is contributed by 7–14 (GIDCVGKS).

It belongs to the thymidylate kinase family.

It carries out the reaction dTMP + ATP = dTDP + ADP. Its function is as follows. Phosphorylation of dTMP to form dTDP in both de novo and salvage pathways of dTTP synthesis. This is Thymidylate kinase from Campylobacter jejuni subsp. jejuni serotype O:6 (strain 81116 / NCTC 11828).